Consider the following 193-residue polypeptide: dTTP/UTP pyrophosphatase (193 aa).

Aspartate 71 functions as the Proton acceptor in the catalytic mechanism.

This sequence belongs to the Maf family. YhdE subfamily. The cofactor is a divalent metal cation.

It localises to the cytoplasm. It catalyses the reaction dTTP + H2O = dTMP + diphosphate + H(+). It carries out the reaction UTP + H2O = UMP + diphosphate + H(+). In terms of biological role, nucleoside triphosphate pyrophosphatase that hydrolyzes dTTP and UTP. May have a dual role in cell division arrest and in preventing the incorporation of modified nucleotides into cellular nucleic acids. The protein is dTTP/UTP pyrophosphatase of Dictyoglomus thermophilum (strain ATCC 35947 / DSM 3960 / H-6-12).